Reading from the N-terminus, the 638-residue chain is 1-deoxy-D-xylulose-5-phosphate synthase (638 aa).

Residues His71 and 112-114 (SHA) each bind thiamine diphosphate. Asp144 contributes to the Mg(2+) binding site. Thiamine diphosphate-binding positions include 145 to 146 (GA), Asn173, Tyr284, and Glu365. Asn173 contacts Mg(2+).

It belongs to the transketolase family. DXPS subfamily. In terms of assembly, homodimer. Requires Mg(2+) as cofactor. It depends on thiamine diphosphate as a cofactor.

The catalysed reaction is D-glyceraldehyde 3-phosphate + pyruvate + H(+) = 1-deoxy-D-xylulose 5-phosphate + CO2. Its pathway is metabolic intermediate biosynthesis; 1-deoxy-D-xylulose 5-phosphate biosynthesis; 1-deoxy-D-xylulose 5-phosphate from D-glyceraldehyde 3-phosphate and pyruvate: step 1/1. Catalyzes the acyloin condensation reaction between C atoms 2 and 3 of pyruvate and glyceraldehyde 3-phosphate to yield 1-deoxy-D-xylulose-5-phosphate (DXP). This chain is 1-deoxy-D-xylulose-5-phosphate synthase, found in Mycobacterium sp. (strain JLS).